The chain runs to 200 residues: Cytochrome c biogenesis ATP-binding export protein CcmA (200 aa).

Residues 1–200 (MRLSGNGLRC…ARELRIGGAA (200 aa)) form the ABC transporter domain. ATP is bound at residue 35–42 (GPNGAGKT).

The protein belongs to the ABC transporter superfamily. CcmA exporter (TC 3.A.1.107) family. The complex is composed of two ATP-binding proteins (CcmA) and two transmembrane proteins (CcmB).

It localises to the cell inner membrane. The catalysed reaction is heme b(in) + ATP + H2O = heme b(out) + ADP + phosphate + H(+). Its function is as follows. Part of the ABC transporter complex CcmAB involved in the biogenesis of c-type cytochromes; once thought to export heme, this seems not to be the case, but its exact role is uncertain. Responsible for energy coupling to the transport system. The chain is Cytochrome c biogenesis ATP-binding export protein CcmA from Nitrobacter winogradskyi (strain ATCC 25391 / DSM 10237 / CIP 104748 / NCIMB 11846 / Nb-255).